The primary structure comprises 101 residues: Large ribosomal subunit protein eL43 (101 aa).

The C4-type zinc-finger motif lies at 40 to 62 (CPSCRSLVRLKRLAFGIWQCPKC).

Belongs to the eukaryotic ribosomal protein eL43 family. Requires Zn(2+) as cofactor.

The polypeptide is Large ribosomal subunit protein eL43 (Pyrobaculum islandicum (strain DSM 4184 / JCM 9189 / GEO3)).